A 499-amino-acid chain; its full sequence is Serine carboxypeptidase-like 34 (499 aa).

The N-terminal stretch at 1–25 (MGSHSVEFSVLVLFLVSFLLGSTSA) is a signal peptide. N-linked (GlcNAc...) asparagine glycans are attached at residues asparagine 73, asparagine 124, and asparagine 158. Disulfide bonds link cysteine 106-cysteine 383, cysteine 269-cysteine 280, and cysteine 304-cysteine 351. Serine 200 is a catalytic residue. N-linked (GlcNAc...) asparagine glycosylation is found at asparagine 310, asparagine 372, and asparagine 375. Catalysis depends on residues aspartate 419 and histidine 471.

It belongs to the peptidase S10 family. Ubiquitous.

The protein localises to the secreted. Its function is as follows. Probable carboxypeptidase. The chain is Serine carboxypeptidase-like 34 (SCPL34) from Arabidopsis thaliana (Mouse-ear cress).